Consider the following 72-residue polypeptide: Translation initiation factor IF-1 (72 aa).

In terms of domain architecture, S1-like spans 1–72 (MAKDDVIEVE…TRGRITYRYK (72 aa)). Tyrosine 60 bears the Phosphotyrosine mark.

This sequence belongs to the IF-1 family. Component of the 30S ribosomal translation pre-initiation complex which assembles on the 30S ribosome in the order IF-2 and IF-3, IF-1 and N-formylmethionyl-tRNA(fMet); mRNA recruitment can occur at any time during PIC assembly.

The protein localises to the cytoplasm. In terms of biological role, one of the essential components for the initiation of protein synthesis. Stabilizes the binding of IF-2 and IF-3 on the 30S subunit to which N-formylmethionyl-tRNA(fMet) subsequently binds. Helps modulate mRNA selection, yielding the 30S pre-initiation complex (PIC). Upon addition of the 50S ribosomal subunit IF-1, IF-2 and IF-3 are released leaving the mature 70S translation initiation complex. This is Translation initiation factor IF-1 from Bacillus pumilus (strain SAFR-032).